The chain runs to 205 residues: Tic20 family protein Ycf60 (205 aa).

5 helical membrane passes run 5–25, 54–74, 102–122, 130–150, and 163–183; these read LFVNILFGTACIIIFGLVILI, AISCLIYFLPLLEGIAQFGIV, LIGFCIFITLYLIFVRGIIQI, IVQALLLYLLDSVIGTVLTSL, and LADTLLLITFMISIYAGTDAL.

Belongs to the Tic20 family.

Its subcellular location is the plastid. The protein resides in the chloroplast membrane. This Cyanidium caldarium (Red alga) protein is Tic20 family protein Ycf60 (ycf60).